The sequence spans 475 residues: ATP synthase subunit beta (475 aa).

Residue 161 to 168 (GGAGVGKT) participates in ATP binding.

Belongs to the ATPase alpha/beta chains family. As to quaternary structure, F-type ATPases have 2 components, CF(1) - the catalytic core - and CF(0) - the membrane proton channel. CF(1) has five subunits: alpha(3), beta(3), gamma(1), delta(1), epsilon(1). CF(0) has three main subunits: a(1), b(2) and c(9-12). The alpha and beta chains form an alternating ring which encloses part of the gamma chain. CF(1) is attached to CF(0) by a central stalk formed by the gamma and epsilon chains, while a peripheral stalk is formed by the delta and b chains.

The protein resides in the cell membrane. The enzyme catalyses ATP + H2O + 4 H(+)(in) = ADP + phosphate + 5 H(+)(out). Produces ATP from ADP in the presence of a proton gradient across the membrane. The catalytic sites are hosted primarily by the beta subunits. The chain is ATP synthase subunit beta from Mycoplasma mycoides subsp. mycoides SC (strain CCUG 32753 / NCTC 10114 / PG1).